A 342-amino-acid chain; its full sequence is Dihydroorotate dehydrogenase (quinone) (342 aa).

FMN-binding positions include 61-65 (AGLDK) and Thr-85. Lys-65 is a substrate binding site. 110–114 (NRMGF) is a binding site for substrate. Residues Asn-138 and Asn-171 each contribute to the FMN site. Asn-171 lines the substrate pocket. The Nucleophile role is filled by Ser-174. Asn-176 is a binding site for substrate. Residues Lys-216 and Thr-244 each contribute to the FMN site. A substrate-binding site is contributed by 245-246 (NT). FMN-binding positions include Gly-267, Gly-296, and 317 to 318 (YS).

Belongs to the dihydroorotate dehydrogenase family. Type 2 subfamily. Monomer. The cofactor is FMN.

It is found in the cell membrane. The catalysed reaction is (S)-dihydroorotate + a quinone = orotate + a quinol. The protein operates within pyrimidine metabolism; UMP biosynthesis via de novo pathway; orotate from (S)-dihydroorotate (quinone route): step 1/1. Catalyzes the conversion of dihydroorotate to orotate with quinone as electron acceptor. This Cellvibrio japonicus (strain Ueda107) (Pseudomonas fluorescens subsp. cellulosa) protein is Dihydroorotate dehydrogenase (quinone).